Consider the following 166-residue polypeptide: 16S rRNA aminocarboxypropyltransferase (166 aa).

Positions 17, 62, 84, 99, and 103 each coordinate S-adenosyl-L-methionine.

Belongs to the TDD superfamily. TSR3 family.

It is found in the cytoplasm. The enzyme catalyses an N(1)-methylpseudouridine in rRNA + S-adenosyl-L-methionine = N(1)-methyl-N(3)-[(3S)-3-amino-3-carboxypropyl]pseudouridine in rRNA + S-methyl-5'-thioadenosine + H(+). Its function is as follows. Aminocarboxypropyltransferase that catalyzes the aminocarboxypropyl transfer on pseudouridine corresponding to position 914 in M.jannaschii 16S rRNA. It constitutes the last step in biosynthesis of the hypermodified N1-methyl-N3-(3-amino-3-carboxypropyl) pseudouridine (m1acp3-Psi). The sequence is that of 16S rRNA aminocarboxypropyltransferase from Saccharolobus solfataricus (strain ATCC 35092 / DSM 1617 / JCM 11322 / P2) (Sulfolobus solfataricus).